The sequence spans 131 residues: Small ribosomal subunit protein uS8 (131 aa).

It belongs to the universal ribosomal protein uS8 family. In terms of assembly, part of the 30S ribosomal subunit. Contacts proteins S5 and S12.

Functionally, one of the primary rRNA binding proteins, it binds directly to 16S rRNA central domain where it helps coordinate assembly of the platform of the 30S subunit. The chain is Small ribosomal subunit protein uS8 from Blochmanniella pennsylvanica (strain BPEN).